The sequence spans 311 residues: HPr kinase/phosphorylase (311 aa).

Catalysis depends on residues histidine 138 and lysine 159. Position 153–160 (153–160 (GDSGIGKS)) interacts with ATP. Serine 160 is a Mg(2+) binding site. Aspartate 177 (proton acceptor; for phosphorylation activity. Proton donor; for dephosphorylation activity) is an active-site residue. The important for the catalytic mechanism of both phosphorylation and dephosphorylation stretch occupies residues 201–210 (LEIRGVGIID). Glutamate 202 provides a ligand contact to Mg(2+). Arginine 243 is an active-site residue. The interval 264–269 (PVKTGR) is important for the catalytic mechanism of dephosphorylation.

Belongs to the HPrK/P family. As to quaternary structure, homohexamer. The cofactor is Mg(2+).

The catalysed reaction is [HPr protein]-L-serine + ATP = [HPr protein]-O-phospho-L-serine + ADP + H(+). It catalyses the reaction [HPr protein]-O-phospho-L-serine + phosphate + H(+) = [HPr protein]-L-serine + diphosphate. Functionally, catalyzes the ATP- as well as the pyrophosphate-dependent phosphorylation of a specific serine residue in HPr, a phosphocarrier protein of the phosphoenolpyruvate-dependent sugar phosphotransferase system (PTS). HprK/P also catalyzes the pyrophosphate-producing, inorganic phosphate-dependent dephosphorylation (phosphorolysis) of seryl-phosphorylated HPr (P-Ser-HPr). The two antagonistic activities of HprK/P are regulated by several intracellular metabolites, which change their concentration in response to the absence or presence of rapidly metabolisable carbon sources (glucose, fructose, etc.) in the growth medium. Therefore, by controlling the phosphorylation state of HPr, HPrK/P is a sensor enzyme that plays a major role in the regulation of carbon metabolism and sugar transport: it mediates carbon catabolite repression (CCR), and regulates PTS-catalyzed carbohydrate uptake and inducer exclusion. The protein is HPr kinase/phosphorylase of Streptococcus gordonii (strain Challis / ATCC 35105 / BCRC 15272 / CH1 / DL1 / V288).